We begin with the raw amino-acid sequence, 334 residues long: Acryloyl-coenzyme A reductase (334 aa).

A Zn(2+)-binding site is contributed by Cys-38. Residue Tyr-39 participates in NADP(+) binding. Residues His-60, Asp-90, Cys-93, Cys-96, Cys-104, and Cys-146 each contribute to the Zn(2+) site. NADP(+) contacts are provided by residues 173–176 (SGGV) and 195–197 (TTS).

Belongs to the zinc-containing alcohol dehydrogenase family. As to quaternary structure, monomer. Zn(2+) serves as cofactor.

The enzyme catalyses propanoyl-CoA + NADP(+) = acryloyl-CoA + NADPH + H(+). Functionally, plays a role in autotrophic carbon fixation via the 3-hydroxypropionate/4-hydroxybutyrate cycle. Catalyzes the acryloyl-CoA dependent NADPH oxidation and formation of propionyl-CoA. Inactive towards 3-hydroxypropionyl-CoA, NADH and crotonyl-CoA. This is Acryloyl-coenzyme A reductase from Sulfurisphaera tokodaii (strain DSM 16993 / JCM 10545 / NBRC 100140 / 7) (Sulfolobus tokodaii).